A 146-amino-acid chain; its full sequence is Putative esterase DR_2321 (146 aa).

This sequence belongs to the thioesterase PaaI family.

This Deinococcus radiodurans (strain ATCC 13939 / DSM 20539 / JCM 16871 / CCUG 27074 / LMG 4051 / NBRC 15346 / NCIMB 9279 / VKM B-1422 / R1) protein is Putative esterase DR_2321.